Consider the following 1023-residue polypeptide: Protein FAM13A (1023 aa).

Positions 43 to 231 (VSLQELERQG…KILENYNTLF (189 aa)) constitute a Rho-GAP domain. The disordered stretch occupies residues 269 to 290 (LERDMPKPPPKTKIPKSRSEGS). S345 is modified (phosphoserine). 2 disordered regions span residues 381-437 (VNNS…SGFN) and 459-562 (CAGE…EVPQ). Residues 384-405 (SGGQSSEDSESGTLSASSATSA) show a composition bias toward low complexity. 2 stretches are compositionally biased toward basic and acidic residues: residues 412 to 427 (SKEQ…KGLI) and 509 to 524 (SDER…HTQH). Polar residues predominate over residues 536–549 (PSLSDTKQQRNQDA). 2 positions are modified to phosphoserine: S597 and S617. Disordered stretches follow at residues 628–663 (QYLD…QEDL) and 726–759 (ISEE…KKQE). Residues 666-730 (AQLTRRIQSL…ESKLKISEED (65 aa)) adopt a coiled-coil conformation. Residue S727 is modified to Phosphoserine. T732 carries the post-translational modification Phosphothreonine. A compositionally biased stretch (polar residues) spans 738-748 (RSNTLPKSFGS). Basic and acidic residues predominate over residues 750-759 (LEKEDEKKQE). The stretch at 946–978 (ASIPELLEHLQEMREEKKRIRKKLRDFEDNFFR) forms a coiled coil.

This sequence belongs to the FAM13 family. In terms of tissue distribution, isoform 1 is widely expressed, with highest expression in skeletal muscle, thymus, brain and lung. Isoform 3 is less abundant than isoform 1 and predominantly expressed in kidney, pancreas, liver, lung and thymus.

This Homo sapiens (Human) protein is Protein FAM13A (FAM13A).